A 616-amino-acid polypeptide reads, in one-letter code: Chaperone protein HscA (616 aa).

The protein belongs to the heat shock protein 70 family.

Its function is as follows. Chaperone involved in the maturation of iron-sulfur cluster-containing proteins. Has a low intrinsic ATPase activity which is markedly stimulated by HscB. Involved in the maturation of IscU. The protein is Chaperone protein HscA of Yersinia enterocolitica serotype O:8 / biotype 1B (strain NCTC 13174 / 8081).